The chain runs to 306 residues: GTP cyclohydrolase FolE2 (306 aa).

The protein belongs to the GTP cyclohydrolase IV family.

It carries out the reaction GTP + H2O = 7,8-dihydroneopterin 3'-triphosphate + formate + H(+). The protein operates within cofactor biosynthesis; 7,8-dihydroneopterin triphosphate biosynthesis; 7,8-dihydroneopterin triphosphate from GTP: step 1/1. Functionally, converts GTP to 7,8-dihydroneopterin triphosphate. This chain is GTP cyclohydrolase FolE2, found in Pseudoalteromonas atlantica (strain T6c / ATCC BAA-1087).